A 197-amino-acid chain; its full sequence is Small ribosomal subunit protein uS5 (197 aa).

The tract at residues 1 to 27 is disordered; that stretch reads MAEREQRGGRDQRGGGRERKEREERDS. The 64-residue stretch at 29-92 folds into the S5 DRBM domain; it reads FVDKLVHINR…ESAKRNLTRV (64 aa).

Belongs to the universal ribosomal protein uS5 family. As to quaternary structure, part of the 30S ribosomal subunit. Contacts proteins S4 and S8.

With S4 and S12 plays an important role in translational accuracy. Its function is as follows. Located at the back of the 30S subunit body where it stabilizes the conformation of the head with respect to the body. The protein is Small ribosomal subunit protein uS5 of Bradyrhizobium diazoefficiens (strain JCM 10833 / BCRC 13528 / IAM 13628 / NBRC 14792 / USDA 110).